The sequence spans 118 residues: Large ribosomal subunit protein bL20 (118 aa).

It belongs to the bacterial ribosomal protein bL20 family.

Its function is as follows. Binds directly to 23S ribosomal RNA and is necessary for the in vitro assembly process of the 50S ribosomal subunit. It is not involved in the protein synthesizing functions of that subunit. This is Large ribosomal subunit protein bL20 from Kosmotoga olearia (strain ATCC BAA-1733 / DSM 21960 / TBF 19.5.1).